The following is a 180-amino-acid chain: Probable chorismate pyruvate-lyase (180 aa).

Substrate contacts are provided by R82, L120, and E165.

It belongs to the UbiC family.

The protein localises to the cytoplasm. The catalysed reaction is chorismate = 4-hydroxybenzoate + pyruvate. It participates in cofactor biosynthesis; ubiquinone biosynthesis. Functionally, removes the pyruvyl group from chorismate, with concomitant aromatization of the ring, to provide 4-hydroxybenzoate (4HB) for the ubiquinone pathway. The chain is Probable chorismate pyruvate-lyase from Aliivibrio fischeri (strain ATCC 700601 / ES114) (Vibrio fischeri).